The following is a 417-amino-acid chain: Tyrosine--tRNA ligase (417 aa).

Residue Tyr-39 participates in L-tyrosine binding. The 'HIGH' region signature appears at Pro-44–Ser-53. Residues Tyr-176 and Gln-180 each contribute to the L-tyrosine site. The 'KMSKS' region signature appears at Lys-236–Ser-240. Lys-239 serves as a coordination point for ATP. The region spanning Ala-350–Leu-417 is the S4 RNA-binding domain.

Belongs to the class-I aminoacyl-tRNA synthetase family. TyrS type 1 subfamily. As to quaternary structure, homodimer.

It localises to the cytoplasm. The catalysed reaction is tRNA(Tyr) + L-tyrosine + ATP = L-tyrosyl-tRNA(Tyr) + AMP + diphosphate + H(+). Functionally, catalyzes the attachment of tyrosine to tRNA(Tyr) in a two-step reaction: tyrosine is first activated by ATP to form Tyr-AMP and then transferred to the acceptor end of tRNA(Tyr). The sequence is that of Tyrosine--tRNA ligase from Bartonella quintana (strain Toulouse) (Rochalimaea quintana).